A 404-amino-acid polypeptide reads, in one-letter code: Cysteine desulfurase IscS (404 aa).

Pyridoxal 5'-phosphate contacts are provided by residues 75 to 76 (AT), N155, Q183, and 203 to 205 (SGH). K206 carries the post-translational modification N6-(pyridoxal phosphate)lysine. Pyridoxal 5'-phosphate is bound at residue T243. C328 functions as the Cysteine persulfide intermediate in the catalytic mechanism. C328 lines the [2Fe-2S] cluster pocket.

It belongs to the class-V pyridoxal-phosphate-dependent aminotransferase family. NifS/IscS subfamily. In terms of assembly, homodimer. Forms a heterotetramer with IscU, interacts with other sulfur acceptors. Requires pyridoxal 5'-phosphate as cofactor.

It localises to the cytoplasm. It carries out the reaction (sulfur carrier)-H + L-cysteine = (sulfur carrier)-SH + L-alanine. It functions in the pathway cofactor biosynthesis; iron-sulfur cluster biosynthesis. Its function is as follows. Master enzyme that delivers sulfur to a number of partners involved in Fe-S cluster assembly, tRNA modification or cofactor biosynthesis. Catalyzes the removal of elemental sulfur and selenium atoms from cysteine and selenocysteine to produce alanine. Functions as a sulfur delivery protein for Fe-S cluster synthesis onto IscU, an Fe-S scaffold assembly protein, as well as other S acceptor proteins. Also functions as a selenium delivery protein in the pathway for the biosynthesis of selenophosphate. In Salmonella typhi, this protein is Cysteine desulfurase IscS.